Here is a 258-residue protein sequence, read N- to C-terminus: Acyl-[acyl-carrier-protein]--UDP-N-acetylglucosamine O-acyltransferase (258 aa).

It belongs to the transferase hexapeptide repeat family. LpxA subfamily. In terms of assembly, homotrimer.

It is found in the cytoplasm. The enzyme catalyses a (3R)-hydroxyacyl-[ACP] + UDP-N-acetyl-alpha-D-glucosamine = a UDP-3-O-[(3R)-3-hydroxyacyl]-N-acetyl-alpha-D-glucosamine + holo-[ACP]. It functions in the pathway glycolipid biosynthesis; lipid IV(A) biosynthesis; lipid IV(A) from (3R)-3-hydroxytetradecanoyl-[acyl-carrier-protein] and UDP-N-acetyl-alpha-D-glucosamine: step 1/6. Functionally, involved in the biosynthesis of lipid A, a phosphorylated glycolipid that anchors the lipopolysaccharide to the outer membrane of the cell. The polypeptide is Acyl-[acyl-carrier-protein]--UDP-N-acetylglucosamine O-acyltransferase (Pseudomonas syringae pv. syringae (strain B728a)).